Here is a 68-residue protein sequence, read N- to C-terminus: Alpha-conotoxin Lp1.1 (68 aa).

An N-terminal signal peptide occupies residues 1 to 21; that stretch reads MGMRMMFIMFMLVVLATTVVT. The propeptide occupies 22 to 48; that stretch reads FTSDRALDAMNAAASNKASRLIALAVR. 2 cysteine pairs are disulfide-bonded: C50-C56 and C51-C64. The interval 52–54 is lacks the Ser-Xaa-Pro motif that is crucial for potent interaction with nAChR; it reads ARA. Residue G65 is modified to Glycine amide. A propeptide spanning residues 66–68 is cleaved from the precursor; that stretch reads GGR.

This sequence belongs to the conotoxin A superfamily. As to expression, expressed by the venom duct.

It localises to the secreted. Alpha-conotoxins act on postsynaptic membranes, they bind to the nicotinic acetylcholine receptors (nAChR) and thus inhibit them. Synthetic peptide inhibits alpha-6/alpha-3/beta-2 and alpha-3/beta-2 nicotinic acetylcholine receptors and causes uncoordinated movement when intramuscularly injected into goldfish. Has a distinct nAChR binding mode from other alpha-conotoxins, due to a different three residue motif (Ala-Xaa-Ala instead of the conserved Ser-Xaa-Pro motif). This chain is Alpha-conotoxin Lp1.1, found in Conus leopardus (Leopard cone).